The sequence spans 32 residues: Photosystem II reaction center protein Z (32 aa).

A helical transmembrane segment spans residues 9–29 (IIFSGSLIWVFLLIIVGFLNY).

This sequence belongs to the PsbZ family. As to quaternary structure, PSII is composed of 1 copy each of membrane proteins PsbA, PsbB, PsbC, PsbD, PsbE, PsbF, PsbH, PsbI, PsbJ, PsbK, PsbL, PsbM, PsbT, PsbY, PsbZ, Psb30/Ycf12, at least 3 peripheral proteins of the oxygen-evolving complex and a large number of cofactors. It forms dimeric complexes.

It is found in the plastid. Its subcellular location is the chloroplast thylakoid membrane. May control the interaction of photosystem II (PSII) cores with the light-harvesting antenna, regulates electron flow through the 2 photosystem reaction centers. PSII is a light-driven water plastoquinone oxidoreductase, using light energy to abstract electrons from H(2)O, generating a proton gradient subsequently used for ATP formation. This Euglena myxocylindracea protein is Photosystem II reaction center protein Z.